Reading from the N-terminus, the 219-residue chain is Ran-specific GTPase-activating protein 1 (219 aa).

Composition is skewed to basic and acidic residues over residues 1–12 (MAEVERKEEQAK), 33–45 (AVGD…EAKK), and 57–72 (PRKD…DNID). The disordered stretch occupies residues 1-72 (MAEVERKEEQ…KGGEERDNID (72 aa)). The RanBD1 domain maps to 70–210 (NIDAAEVVEK…YDLGRAHNEK (141 aa)).

The protein belongs to the RANBP1 family.

The protein resides in the cytoplasm. It localises to the nucleus. Functionally, important for the export of protein containing nuclear export signal (NES) out of the nucleus. The protein is Ran-specific GTPase-activating protein 1 (YRB1) of Encephalitozoon cuniculi (strain GB-M1) (Microsporidian parasite).